The sequence spans 310 residues: tRNA-cytidine(32) 2-sulfurtransferase (310 aa).

The PP-loop motif motif lies at 48-53 (SGGKDS). Cys-123, Cys-126, and Cys-214 together coordinate [4Fe-4S] cluster.

Belongs to the TtcA family. Homodimer. Mg(2+) is required as a cofactor. Requires [4Fe-4S] cluster as cofactor.

The protein localises to the cytoplasm. It catalyses the reaction cytidine(32) in tRNA + S-sulfanyl-L-cysteinyl-[cysteine desulfurase] + AH2 + ATP = 2-thiocytidine(32) in tRNA + L-cysteinyl-[cysteine desulfurase] + A + AMP + diphosphate + H(+). Its pathway is tRNA modification. Functionally, catalyzes the ATP-dependent 2-thiolation of cytidine in position 32 of tRNA, to form 2-thiocytidine (s(2)C32). The sulfur atoms are provided by the cysteine/cysteine desulfurase (IscS) system. The protein is tRNA-cytidine(32) 2-sulfurtransferase of Vibrio vulnificus (strain YJ016).